Reading from the N-terminus, the 1793-residue chain is MIFQSFILDNLVSLCLKIINSVIVVGLYYGFMTTFSTGPSYLFLLRAHVMEEGTEKKISATTGFITGQLVMFISIYYAPLHIALDRPHTITVITLPYLLLYFLGNNQKNFLNYVYKNQNSIRHFSIQRIFFQNLFFQLLNPFFLPSSILMRLANIYIFQSNNKVLFLTSSFVGWLIGHVFFMKWIGLMLVWIQEKNNSIKSTVAIRSNKGVLAKFRKSMFQIFLIFFFITCLYYLGRIPPIYFFTPKMSEIKERGEIEKREGEIDIEINSQRAGSKQEQKITAEEKLSPYLFSKKNNNLDKIKEENDIFGFQKPLVTILFDYNRWNRPLRYIKNDRFENVVRNEISQFFFFTCQSDGKERISFTYPPNLSTFQKMMEMKISLFTRDIISYEELSNSWRSTNEEKKKKLTNEFLNRVEVLDKESLPVDIFENRIRLCNDEKKQKYLTKEYDPFLNGPCRGQIQKWFSPPIQKETYKKNSLFINKIHGILFSNTNNYPKFEQKKNIFDRKSLLTDINFFFNLITKFSRKSVSSLNFEGLYLFPKDNKGKMSSKKKKFLFDTIRPDLNDNKIVNLQKCIGINEIVKKLPRWSYNLIDELEQLEGKKKVEYHQIRSRKAKRVVLLTKNSQNDDNYDETTDTDNTEKKKELALIRYSQQPDFRRDIIKGSIRAQRRKTVTCKLFQRSVDSPLFLEKMEKTSFFCFDILDSSKIFFMFKNWIRKKKELKNSDYTDEKAKESQKKEEEKIKKNEKEEKRRIEIGEAWDSIIFAQVIRGCLLITQSILRKYILLPSLIITKNIVRILLFQFPEWSEDFRDWQREMYIKCTYNGVQLSETEFPKKWLTDGIQIKILFPFRLKPWHRSKLRFTEKKKDPLKNKKVKKKNFCFLTIFGMEVELPFSGYPRNRFSFFDPILKELKKKMKKLKNNFFLILKIVNERTKNFITTLKETSKRIIQSILKKVLFLNKKIKKLYNYLFLFRFKKIDELNQNKKNFPITKNNPIIYESTILIQAINKTNCSLTEKKIKAINAKTKKIIKKIERMTKENKGGFLISEINSNSKKTSSNTKGLELEKKILQILQRRNVQLTHKLYSFFKFLLNFMKKVYTDIFLCIVSVPRINVQFFLESTKKIINQSIYNKKTNEEIIDKTNQSIIHFISIINKSSNTKNTNSAANSYEVSALSQAYVFFKISQIQVLNVYKYKFKYVFDYDGRSFFIKDEIKDYFFGIQGIIHSKLRHKNSPVSLKNQWTNWLKVHYQYDLSQNRWSRLVQKNLKNRINKHRLDQNKDLTKCDSYKKTQLIVSKNKKQQVDFLVNLLIQKKIKKQSRYDLLLYKFINYAEKKELSIYGYRSPFQANKKRAISYDYNTQKKEFFDRMDDISIKNYIAEDAIRYIEQNRDRKYFDWVVMDVKIQNNSISNLQFSFFFKFLRFYDAYRNKPWIIPIKFLFLHFSVNQNFNKIKNIIEKKRRIDIFKPWKKKKILEVELETPNRAKKEYTSRVDLNKPSLSNQEKDIEEDYGESDSKKGGKDKNKKKYKNKIEAEVNLLLRKYLNFHLNWKGSLNKRVINNVKVYCLLIRLKNIKQIAISSIQRGELSLDIMMIQNEKDSTLTGFRKKKEFIEKGIFIIEPVRLSRKNNEQFFMYETARLLLIHKSKRQINQRNPEKSDLDKQIFYKNIPPKRDQRITQNKEKKHYALVVIENILSARRRRELRILICFNPRSINSMPRKTIFDNENKINNCCQVFAKNKDLDKEKKILMNLKLILWPNYRLEDLACINRYWFDTYNGSRFSIVRIHMYPRLKMR.

6 helical membrane-spanning segments follow: residues 11–31 (LVSLCLKIINSVIVVGLYYGF), 64–84 (FITGQLVMFISIYYAPLHIAL), 90–112 (ITVITLPYLLLYFLGNNQKNFLN), 129–149 (IFFQNLFFQLLNPFFLPSSIL), 172–192 (VGWLIGHVFFMKWIGLMLVWI), and 222–242 (IFLIFFFITCLYYLGRIPPIY). The segment at 1504–1524 (DIEEDYGESDSKKGGKDKNKK) is disordered.

The protein belongs to the TIC214 family. In terms of assembly, part of the Tic complex.

The protein resides in the plastid. It is found in the chloroplast inner membrane. Its function is as follows. Involved in protein precursor import into chloroplasts. May be part of an intermediate translocation complex acting as a protein-conducting channel at the inner envelope. This is Protein TIC 214 from Lotus japonicus (Lotus corniculatus var. japonicus).